The chain runs to 444 residues: Argininosuccinate synthase (444 aa).

Residues 17 to 25 (AFSGGLDTS) and Ala-43 each bind ATP. Position 99 (Tyr-99) interacts with L-citrulline. 2 residues coordinate ATP: Gly-129 and Thr-131. L-aspartate contacts are provided by Thr-131, Asn-135, and Asp-136. An L-citrulline-binding site is contributed by Asn-135. Asp-136 is a binding site for ATP. Residues Arg-139 and Ser-192 each contribute to the L-citrulline site. Asp-194 contacts ATP. The L-citrulline site is built by Thr-201, Glu-203, and Glu-280.

Belongs to the argininosuccinate synthase family. Type 2 subfamily. Homotetramer.

Its subcellular location is the cytoplasm. The enzyme catalyses L-citrulline + L-aspartate + ATP = 2-(N(omega)-L-arginino)succinate + AMP + diphosphate + H(+). Its pathway is amino-acid biosynthesis; L-arginine biosynthesis; L-arginine from L-ornithine and carbamoyl phosphate: step 2/3. The protein is Argininosuccinate synthase of Delftia acidovorans (strain DSM 14801 / SPH-1).